We begin with the raw amino-acid sequence, 118 residues long: Large ribosomal subunit protein uL18 (118 aa).

Belongs to the universal ribosomal protein uL18 family. Part of the 50S ribosomal subunit; part of the 5S rRNA/L5/L18/L25 subcomplex. Contacts the 5S and 23S rRNAs.

This is one of the proteins that bind and probably mediate the attachment of the 5S RNA into the large ribosomal subunit, where it forms part of the central protuberance. In Helicobacter hepaticus (strain ATCC 51449 / 3B1), this protein is Large ribosomal subunit protein uL18.